Reading from the N-terminus, the 204-residue chain is Octanoyltransferase (204 aa).

The 178-residue stretch at 27 to 204 (KNTKDELWIV…LINYVSRNRH (178 aa)) folds into the BPL/LPL catalytic domain. Substrate contacts are provided by residues 66–73 (RGGQVTYH), 133–135 (ALG), and 146–148 (GLS). Cysteine 164 acts as the Acyl-thioester intermediate in catalysis.

This sequence belongs to the LipB family.

The protein localises to the cytoplasm. It carries out the reaction octanoyl-[ACP] + L-lysyl-[protein] = N(6)-octanoyl-L-lysyl-[protein] + holo-[ACP] + H(+). The protein operates within protein modification; protein lipoylation via endogenous pathway; protein N(6)-(lipoyl)lysine from octanoyl-[acyl-carrier-protein]: step 1/2. In terms of biological role, catalyzes the transfer of endogenously produced octanoic acid from octanoyl-acyl-carrier-protein onto the lipoyl domains of lipoate-dependent enzymes. Lipoyl-ACP can also act as a substrate although octanoyl-ACP is likely to be the physiological substrate. The polypeptide is Octanoyltransferase (Vesicomyosocius okutanii subsp. Calyptogena okutanii (strain HA)).